Reading from the N-terminus, the 630-residue chain is Sodium-dependent serotonin transporter (630 aa).

The Cytoplasmic segment spans residues 1–87 (METTPLNSQK…ERETWGKKMD (87 aa)). Residues 23-60 (ENGVLQKGVPTTADRAEPSQISNGYSAVPSTSAGDEAS) form a disordered region. Positions 41 to 55 (SQISNGYSAVPSTSA) are enriched in polar residues. Tyr47 carries the post-translational modification Phosphotyrosine. The chain crosses the membrane as a helical span at residues 88 to 112 (FLLSVIGYAVDLGNIWRFPYICYQN). Na(+) contacts are provided by Gly94, Ala96, Val97, Asp98, and Asn101. Asp98 serves as a coordination point for serotonin. Residues 113-115 (GGG) lie on the Extracellular side of the membrane. Residues 116-135 (AFLLPYTIMAIFGGIPLFYM) form a helical membrane-spanning segment. Over 136–160 (ELALGQYHRNGCISIWRKICPIFKG) the chain is Cytoplasmic. At Tyr142 the chain carries Phosphotyrosine. Residues 161–186 (IGYAICIIAFYIASYYNTIIAWALYY) form a helical membrane-spanning segment. At 187–252 (LISSLTDRLP…KGLQDLGTIS (66 aa)) the chain is on the extracellular side. A disulfide bridge links Cys200 with Cys209. Asn208 and Asn217 each carry an N-linked (GlcNAc...) asparagine glycan. The helical transmembrane segment at 253–271 (WQLTLCIVLIFTVIYFSIW) threads the bilayer. The Cytoplasmic portion of the chain corresponds to 272-277 (KGVKTS). Thr276 is subject to Phosphothreonine. A helical membrane pass occupies residues 278–297 (GKVVWVTATFPYIVLSVLLV). Over 298-324 (RGATLPGAWRGVVFYLKPNWQKLLETG) the chain is Extracellular. The helical transmembrane segment at 325–347 (VWVDAAAQIFFSLGPGFGVLLAF) threads the bilayer. Position 336 (Ser336) interacts with Na(+). Over 348-360 (ASYNKFNNNCYQD) the chain is Cytoplasmic. The chain crosses the membrane as a helical span at residues 361-380 (ALVTSVVNCMTSFVSGFVIF). A Na(+)-binding site is contributed by Asn368. Topologically, residues 381–421 (TVLGYMAEMRNEDVSEVAKDAGPSLLFITYAEAIANMPAST) are extracellular. The helical transmembrane segment at 422–443 (FFAIIFFLMLITLGLDSTFAGL) threads the bilayer. Residues Leu434, Asp437, and Ser438 each coordinate Na(+). Serotonin is bound at residue Thr439. At 444–463 (EGVITAVLDEFPHIWAKRRE) the chain is on the cytoplasmic side. Residues 464-483 (WFVLIVVITCVLGSLLTLTS) traverse the membrane as a helical segment. The Extracellular portion of the chain corresponds to 484 to 494 (GGAYVVTLLEE). The serotonin site is built by Glu494 and Tyr495. Residues 495–516 (YATGPAVLTVALIEAVAVSWFY) form a helical membrane-spanning segment. The Cytoplasmic segment spans residues 517 to 538 (GITQFCSDVKEMLGFSPGWFWR). A helical membrane pass occupies residues 539–558 (ICWVAISPLFLLFIICSFLM). Phe556 and Ser559 together coordinate serotonin. Residues 559 to 574 (SPPQLRLFQYNYPHWS) lie on the Extracellular side of the membrane. The chain crosses the membrane as a helical span at residues 575-595 (IVLGYCIGMSSVICIPTYIIY). Topologically, residues 596 to 630 (RLISTPGTLKERIIKSITPETPTEIPCGDIRMNAV) are cytoplasmic. The interval 616–624 (TPTEIPCGD) is interaction with RAB4A.

Belongs to the sodium:neurotransmitter symporter (SNF) (TC 2.A.22) family. SLC6A4 subfamily. In terms of assembly, monomer or homooligomer. Interacts with TGFB1I1. Interacts with SEC23A, SEC24C and PATJ. Interacts with NOS1; the interaction may diminish the cell surface localization of SERT in the brain and, correspondingly, reduce serotonin reuptake. Interacts (via C-terminus) with SCAMP2; the interaction is direct and retains transporter molecules intracellularly. Interacts with filamentous actin and STX1A. Interacts (via the N-terminus) with STX1A (via the H3 domain); this interaction regulates SLC4A6 channel conductance. Interacts with ITGAV:ITGB3. Interacts (via C-terminus) with ITGB3; this interaction regulates SLC6A4 trafficking. In terms of processing, phosphorylation at Thr-276 increases 5-HT uptake and is required for cGMP-mediated SERT regulation. As to expression, expressed in the intestinal crypt epithelial cells and myenteric neurons of the small intestine (at protein level). Expressed in the brain.

It localises to the cell membrane. The protein localises to the endomembrane system. Its subcellular location is the endosome membrane. It is found in the synapse. The protein resides in the cell junction. It localises to the focal adhesion. The protein localises to the cell projection. Its subcellular location is the neuron projection. The catalysed reaction is serotonin(out) + K(+)(in) + Na(+)(out) + H(+)(in) = serotonin(in) + K(+)(out) + Na(+)(in) + H(+)(out). In terms of biological role, serotonin transporter that cotransports serotonin with one Na(+) ion in exchange for one K(+) ion and possibly one proton in an overall electroneutral transport cycle. Transports serotonin across the plasma membrane from the extracellular compartment to the cytosol thus limiting serotonin intercellular signaling. Essential for serotonin homeostasis in the central nervous system. In the developing somatosensory cortex, acts in glutamatergic neurons to control serotonin uptake and its trophic functions accounting for proper spatial organization of cortical neurons and elaboration of sensory circuits. In the mature cortex, acts primarily in brainstem raphe neurons to mediate serotonin uptake from the synaptic cleft back into the pre-synaptic terminal thus terminating serotonin signaling at the synapse. Modulates mucosal serotonin levels in the gastrointestinal tract through uptake and clearance of serotonin in enterocytes. Required for enteric neurogenesis and gastrointestinal reflexes. Regulates blood serotonin levels by ensuring rapid high affinity uptake of serotonin from plasma to platelets, where it is further stored in dense granules via vesicular monoamine transporters and then released upon stimulation. Mechanistically, the transport cycle starts with an outward-open conformation having Na1(+) and Cl(-) sites occupied. The binding of a second extracellular Na2(+) ion and serotonin substrate leads to structural changes to outward-occluded to inward-occluded to inward-open, where the Na2(+) ion and serotonin are released into the cytosol. Binding of intracellular K(+) ion induces conformational transitions to inward-occluded to outward-open and completes the cycle by releasing K(+) possibly together with a proton bound to Asp-98 into the extracellular compartment. Na1(+) and Cl(-) ions remain bound throughout the transport cycle. Additionally, displays serotonin-induced channel-like conductance for monovalent cations, mainly Na(+) ions. The channel activity is uncoupled from the transport cycle and may contribute to the membrane resting potential or excitability. This is Sodium-dependent serotonin transporter (Slc6a4) from Rattus norvegicus (Rat).